Here is a 164-residue protein sequence, read N- to C-terminus: ATP synthase subunit b (164 aa).

Residues Gly-6 to Ile-26 form a helical membrane-spanning segment.

Belongs to the ATPase B chain family. In terms of assembly, F-type ATPases have 2 components, F(1) - the catalytic core - and F(0) - the membrane proton channel. F(1) has five subunits: alpha(3), beta(3), gamma(1), delta(1), epsilon(1). F(0) has three main subunits: a(1), b(2) and c(10-14). The alpha and beta chains form an alternating ring which encloses part of the gamma chain. F(1) is attached to F(0) by a central stalk formed by the gamma and epsilon chains, while a peripheral stalk is formed by the delta and b chains.

It localises to the cell membrane. Functionally, f(1)F(0) ATP synthase produces ATP from ADP in the presence of a proton or sodium gradient. F-type ATPases consist of two structural domains, F(1) containing the extramembraneous catalytic core and F(0) containing the membrane proton channel, linked together by a central stalk and a peripheral stalk. During catalysis, ATP synthesis in the catalytic domain of F(1) is coupled via a rotary mechanism of the central stalk subunits to proton translocation. Its function is as follows. Component of the F(0) channel, it forms part of the peripheral stalk, linking F(1) to F(0). This chain is ATP synthase subunit b, found in Streptococcus pyogenes serotype M12 (strain MGAS2096).